The sequence spans 455 residues: ATP-dependent protease ATPase subunit HslU (455 aa).

Residues Val23, 65–70 (GVGKTE), Asp266, Glu333, and Arg405 each bind ATP.

This sequence belongs to the ClpX chaperone family. HslU subfamily. As to quaternary structure, a double ring-shaped homohexamer of HslV is capped on each side by a ring-shaped HslU homohexamer. The assembly of the HslU/HslV complex is dependent on binding of ATP.

The protein resides in the cytoplasm. Functionally, ATPase subunit of a proteasome-like degradation complex; this subunit has chaperone activity. The binding of ATP and its subsequent hydrolysis by HslU are essential for unfolding of protein substrates subsequently hydrolyzed by HslV. HslU recognizes the N-terminal part of its protein substrates and unfolds these before they are guided to HslV for hydrolysis. This chain is ATP-dependent protease ATPase subunit HslU, found in Xanthomonas euvesicatoria pv. vesicatoria (strain 85-10) (Xanthomonas campestris pv. vesicatoria).